The following is a 189-amino-acid chain: uncharacterized protein (189 aa).

A signal peptide spans 1-19; that stretch reads MNKLTILFLILALISVIYA. The disordered stretch occupies residues 24–189; it reads PSSSEDSSSN…GSGSSGTVYY (166 aa). Positions 25–69 are enriched in low complexity; the sequence is SSSEDSSSNDSNSQVTGSQSYSGSQSDSNSGSESHTINTGSSYSG. A compositionally biased stretch (gly residues) spans 70–101; sequence SGSGSSGISGGSGSGSGSGSGSGSGSGSGSGA. A compositionally biased stretch (low complexity) spans 102 to 142; that stretch reads VSGSQSGSGAVSGSQSGSGAVSGSQSGVQTGSQSGAGSASG. Residues 144 to 157 show a composition bias toward polar residues; that stretch reads FTGNPSGSQSQEIN. The segment covering 165-183 has biased composition (gly residues); sequence SGSGAPTGAATGSGSGSGS.

This is an uncharacterized protein from Dictyostelium discoideum (Social amoeba).